Consider the following 173-residue polypeptide: DELTA-actitoxin-Oor1b (173 aa).

The segment at Gly6 to Ser25 is N-terminal region. Phosphocholine-binding residues include Ser49, Val82, Ser100, Pro102, Tyr128, and Tyr133. The interval Ser100 to Lys115 is trp-rich region, which is important for the binding to lipid membrane.

Belongs to the actinoporin family. Sea anemone subfamily. As to quaternary structure, octamer or nonamer in membranes. Monomer in the soluble state.

The protein localises to the secreted. The protein resides in the nematocyst. It localises to the target cell membrane. Its function is as follows. Pore-forming protein that forms cations-selective hydrophilic pores of around 1 nm and causes cardiac stimulation and cytolysis. Pore formation is a multi-step process that involves specific recognition of membrane sphingomyelin (but neither cholesterol nor phosphatidylcholine) using aromatic rich region and adjacent phosphocholine (POC) binding site, firm binding to the membrane (mainly driven by hydrophobic interactions) accompanied by the transfer of the N-terminal region to the lipid-water interface and finally pore formation after oligomerization of monomers. Cytolytic effects include red blood cells hemolysis, platelet aggregation and lysis, cytotoxic and cytostatic effects on fibroblasts. Lethality in mammals has been ascribed to severe vasospasm of coronary vessels, cardiac arrhythmia, and inotropic effects. The chain is DELTA-actitoxin-Oor1b from Oulactis orientalis (Japan anemone).